The primary structure comprises 492 residues: GTPase Der (492 aa).

2 EngA-type G domains span residues 3–166 and 205–378; these read PVVA…VDEV and IKLA…DSAT. GTP-binding positions include 9–16, 56–60, 118–121, 211–218, 258–262, and 323–326; these read GRPNVGKS, DTGGI, NKTD, DTAGV, and NKWD. The region spanning 379-463 is the KH-like domain; the sequence is RRVSTAMLTR…PIRIQFKEGE (85 aa).

It belongs to the TRAFAC class TrmE-Era-EngA-EngB-Septin-like GTPase superfamily. EngA (Der) GTPase family. Associates with the 50S ribosomal subunit.

In terms of biological role, GTPase that plays an essential role in the late steps of ribosome biogenesis. The polypeptide is GTPase Der (Klebsiella pneumoniae subsp. pneumoniae (strain ATCC 700721 / MGH 78578)).